A 570-amino-acid polypeptide reads, in one-letter code: Pyruvate decarboxylase (570 aa).

Positions 1–2 (MV) are cleaved as a propeptide — removed in mature form. Aspartate 33 and histidine 120 together coordinate substrate. Residues 394 to 476 (DSWFNGIQLK…MLINNRGYTI (83 aa)) are thiamine pyrophosphate binding. Aspartate 444, asparagine 471, and glycine 473 together coordinate Mg(2+). Glutamate 477 provides a ligand contact to substrate.

Belongs to the TPP enzyme family. Homomer. A metal cation is required as a cofactor. Thiamine diphosphate serves as cofactor.

The protein resides in the cytoplasm. It carries out the reaction a 2-oxocarboxylate + H(+) = an aldehyde + CO2. The protein operates within carbohydrate metabolism; pyruvate metabolism. In Neurospora crassa (strain ATCC 24698 / 74-OR23-1A / CBS 708.71 / DSM 1257 / FGSC 987), this protein is Pyruvate decarboxylase (cfp).